Consider the following 173-residue polypeptide: MPRSQKNDNFIDKTFTVVADIILKVLPTTVREKAAFSYYRDGMSAQAEGEYAEALQNYYEAMRLEIDPYDRSYILYNIGLIHTSNGEHGKALEYYYQAIERNPSLPQALNNIAVIYHYRGEQAIEEGNIATSEILFNQAASYWKQAIRLAPNSYIEAQNWLKITGRIEDNINL.

3 TPR repeats span residues 35–68, 72–105, and 120–153; these read AFSY…EIDP, SYIL…NPSL, and GEQA…APNS.

It belongs to the Ycf3 family.

It localises to the plastid. It is found in the chloroplast thylakoid membrane. In terms of biological role, essential for the assembly of the photosystem I (PSI) complex. May act as a chaperone-like factor to guide the assembly of the PSI subunits. This chain is Photosystem I assembly protein Ycf3, found in Mesostigma viride (Green alga).